A 450-amino-acid polypeptide reads, in one-letter code: CBL-interacting protein kinase 23 (450 aa).

The Protein kinase domain occupies Y13–F268. Residues L19–V27 and K42 contribute to the ATP site. Catalysis depends on D136, which acts as the Proton acceptor. Positions D154–E183 are activation loop. The NAF domain maps to E306–E331. Residues K339–V368 are PPI.

It belongs to the protein kinase superfamily. CAMK Ser/Thr protein kinase family. SNF1 subfamily. It depends on Mn(2+) as a cofactor.

The catalysed reaction is L-seryl-[protein] + ATP = O-phospho-L-seryl-[protein] + ADP + H(+). The enzyme catalyses L-threonyl-[protein] + ATP = O-phospho-L-threonyl-[protein] + ADP + H(+). In terms of biological role, CIPK serine-threonine protein kinases interact with CBL proteins. Binding of a CBL protein to the regulatory NAF domain of CIPK protein lead to the activation of the kinase in a calcium-dependent manner. In Oryza sativa subsp. japonica (Rice), this protein is CBL-interacting protein kinase 23 (CIPK23).